The sequence spans 513 residues: Bifunctional purine biosynthesis protein PurH (513 aa).

Residues 1–147 enclose the MGS-like domain; that stretch reads MIQIKRALVS…KNHKNVVVLT (147 aa).

Belongs to the PurH family.

The enzyme catalyses (6R)-10-formyltetrahydrofolate + 5-amino-1-(5-phospho-beta-D-ribosyl)imidazole-4-carboxamide = 5-formamido-1-(5-phospho-D-ribosyl)imidazole-4-carboxamide + (6S)-5,6,7,8-tetrahydrofolate. It catalyses the reaction IMP + H2O = 5-formamido-1-(5-phospho-D-ribosyl)imidazole-4-carboxamide. Its pathway is purine metabolism; IMP biosynthesis via de novo pathway; 5-formamido-1-(5-phospho-D-ribosyl)imidazole-4-carboxamide from 5-amino-1-(5-phospho-D-ribosyl)imidazole-4-carboxamide (10-formyl THF route): step 1/1. It participates in purine metabolism; IMP biosynthesis via de novo pathway; IMP from 5-formamido-1-(5-phospho-D-ribosyl)imidazole-4-carboxamide: step 1/1. The protein is Bifunctional purine biosynthesis protein PurH of Leptospira biflexa serovar Patoc (strain Patoc 1 / Ames).